The chain runs to 566 residues: Transcription factor P14E8.02 (566 aa).

Residues 1–32 form a disordered region; sequence MNISSQNVLLPSPIPSSSPMASHKKSWLSKHP. S73 bears the Phosphoserine mark. Positions 86 to 137 constitute an FHA domain; that stretch reads NKIGRSSQQCDHVLSTVDKAISRVHAIVTCTQDRMIIECVGWNGMIVSDKMR. Disordered stretches follow at residues 191 to 217, 269 to 291, 312 to 334, and 364 to 437; these read EENR…SQDY, DCSK…LLNG, ESDD…IEES, and FTNH…TKEN. A compositionally biased stretch (acidic residues) spans 314–330; the sequence is DDLDKNEEISEGEEYTP. Polar residues-rich tracts occupy residues 373–383 and 414–428; these read NSNITTSNDSP and DENT…PSSH. S379 and S382 each carry phosphoserine.

This sequence belongs to the PLM2/TOS4 family.

It localises to the nucleus. Functionally, probable transcriptional regulatory protein Required for G1/S progression. The sequence is that of Transcription factor P14E8.02 from Schizosaccharomyces pombe (strain 972 / ATCC 24843) (Fission yeast).